The following is a 212-amino-acid chain: Uridine kinase (212 aa).

13-20 (GGSGSGKT) is an ATP binding site.

Belongs to the uridine kinase family.

Its subcellular location is the cytoplasm. It carries out the reaction uridine + ATP = UMP + ADP + H(+). It catalyses the reaction cytidine + ATP = CMP + ADP + H(+). The protein operates within pyrimidine metabolism; CTP biosynthesis via salvage pathway; CTP from cytidine: step 1/3. It participates in pyrimidine metabolism; UMP biosynthesis via salvage pathway; UMP from uridine: step 1/1. The chain is Uridine kinase from Bacillus cereus (strain B4264).